Reading from the N-terminus, the 66-residue chain is Toxin Tppa1 (66 aa).

Residues 1-63 enclose the LCN-type CS-alpha/beta domain; sequence KDGYLVGNDG…TWSRSTNRCG (63 aa). Cystine bridges form between Cys-11–Cys-62, Cys-15–Cys-37, Cys-23–Cys-43, and Cys-27–Cys-45.

Belongs to the long (4 C-C) scorpion toxin superfamily. Sodium channel inhibitor family. Beta subfamily. In terms of tissue distribution, expressed by the venom gland.

It is found in the secreted. Its function is as follows. Beta toxins bind voltage-independently at site-4 of sodium channels (Nav) and shift the voltage of activation toward more negative potentials thereby affecting sodium channel activation and promoting spontaneous and repetitive firing. In Tityus pachyurus (Colombian scorpion), this protein is Toxin Tppa1.